The chain runs to 1469 residues: Chromosome condensation protein dpy-27 (1469 aa).

Residues 1–25 (MQPFKRRALTSDDDRPYADTDSMPE) form a disordered region. Residues 9-18 (LTSDDDRPYA) show a composition bias toward basic and acidic residues. Residue 122 to 129 (GPNGSGKS) participates in ATP binding. Positions 356–542 (ELEENKDIML…KGTLQTMMAE (187 aa)) form a coiled coil. One can recognise an SMC hinge domain in the interval 621–736 (PGFKGRLGDL…VDSLEEATRI (116 aa)). The tract at residues 758 to 781 (GALTGGGKPTTGRIRNDNNPNMSG) is disordered. 3 coiled-coil regions span residues 805–974 (LKLQ…AQLE), 1016–1056 (AYQT…DIIE), and 1159–1182 (TSAK…RMAR). A disordered region spans residues 1404–1469 (LPEFNRFPPA…VQRRVRRSRH (66 aa)). Acidic residues predominate over residues 1439–1449 (EEEDEEDELIE).

Belongs to the SMC family. SMC4 subfamily. Component of the dosage compensation complex, which contains the mix-1/SMC2 and dpy-27/SMC4 heterodimer, and three non SMC subunits that probably regulate the complex: dpy-26, capg-1 and dpy-28. Within the complex, interacts with dpy-28, mix-1, dpy-26 and capg-1. Interacts with dpy-21. Interacts with dpy-28; the interaction is required for dpy-28 protein stability and dpy-28 association with the X chromosome. Interacts with smcl-1.

The protein localises to the nucleus. It localises to the chromosome. Its function is as follows. Central component of the condensin I-like dosage compensation complex that associates specifically with hermaphrodite X chromosomes to reduce their gene transcription throughout development. Its strong similarity with the condensin subunit smc4 suggests that it may reduce the X-chromosome transcript level by condensing the chromatin structure during interphase. Involved in the recruitment of the dosage compensation proteins mix-1 and dpy-21 to the X chromosome. Might be involved in the reduction of histone H4 lysine 16 acetylation (H4K16ac) on dosage compensated X chromosomes. As a member of the dosage compensation complex, also binds to regulatory regions of the autosomal her-1 gene, required for male development, possibly contributing to its repression in hermaphrodites. Also plays a role in the regulation of growth and body fat metabolism downstream of the TOR complex 2 pathway. This is Chromosome condensation protein dpy-27 (dpy-27) from Caenorhabditis elegans.